The following is a 192-amino-acid chain: uncharacterized protein (192 aa).

The 132-residue stretch at 29 to 160 (HRQAAVLIPI…PLDIYRRGDS (132 aa)) folds into the Nudix hydrolase domain. A Nudix box motif is present at residues 67 to 89 (GAVDDTDASVIAAALREAEEEVA). Mg(2+) is bound by residues E83 and E87.

The protein belongs to the Nudix hydrolase family. PCD1 subfamily. Mn(2+) is required as a cofactor. Requires Mg(2+) as cofactor.

In terms of biological role, probably mediates the hydrolysis of some nucleoside diphosphate derivatives. This is an uncharacterized protein from Escherichia coli (strain SE11).